A 208-amino-acid polypeptide reads, in one-letter code: WEB family protein At2g17940 (208 aa).

Residues 78–113 are a coiled coil; the sequence is RTLQLNTSLSNRIKTLTQELELGKKEIQRLSRTRSS.

This sequence belongs to the WEB family.

The chain is WEB family protein At2g17940 from Arabidopsis thaliana (Mouse-ear cress).